Reading from the N-terminus, the 255-residue chain is MTLTIKEVTQLINAVNTIEELENHECFLDERKGVQNAIARRRKALEKEQALKEKYVEMTYFENEILTENPNAIICGIDEVGRGPLAGPVVACATILNSNHNYLGLDDSKKVPVTKRLELNEALKNEVTAFAYGIATAEEIDEFNIYKATQIAMQRAIDGLSVQPTHLLIDAMTLDNALPQVSLIKGDARSVSIAAASIMAKVFRDDYMTQLSKDYPEYGFEKNAGYGTKQHLLAIDDIGIMKEHRKSFEPIKSLL.

Residues 72–255 (AIICGIDEVG…KSFEPIKSLL (184 aa)) form the RNase H type-2 domain. Positions 78, 79, and 170 each coordinate a divalent metal cation.

Belongs to the RNase HII family. The cofactor is Mn(2+). It depends on Mg(2+) as a cofactor.

The protein localises to the cytoplasm. The catalysed reaction is Endonucleolytic cleavage to 5'-phosphomonoester.. Endonuclease that specifically degrades the RNA of RNA-DNA hybrids. In Staphylococcus aureus (strain MRSA252), this protein is Ribonuclease HII.